The following is a 923-amino-acid chain: Protein prickle (923 aa).

The segment at 1 to 196 (MSYPYQKSHH…HPFHSPASAA (196 aa)) is disordered. Positions 11–34 (QTQQPQQNGHPQHQLMLQQQQQAD) are enriched in low complexity. A compositionally biased stretch (basic residues) spans 37–49 (PHHHHHHHVHHAT). 2 stretches are compositionally biased toward low complexity: residues 59–73 (RSPL…LYSG) and 106–118 (MPGM…PPGM). Over residues 122 to 134 (LGGGGGGGGGGSA) the composition is skewed to gly residues. Composition is skewed to low complexity over residues 152–169 (STVT…SARS) and 184–196 (SSHH…ASAA). The 109-residue stretch at 275-383 (GGGHNYSQSD…TVKQITTTLI (109 aa)) folds into the PET domain. 3 consecutive LIM zinc-binding domains span residues 382-446 (LICE…ETLK), 447-507 (PRCS…MFAE), and 508-570 (YCDY…GEPP). 2 disordered regions span residues 571-668 (TPSD…LDLT) and 703-867 (GPIA…SSAD). Over residues 709–718 (NGNGPTGGGP) the composition is skewed to gly residues. Residues 738 to 748 (ESPSFSGTNSP) are compositionally biased toward polar residues. Over residues 777–786 (HSIKEVRFEG) the composition is skewed to basic and acidic residues. Positions 792–805 (LPRTKSYCQRNGGQ) are enriched in polar residues. The segment covering 817-827 (SDDDELAEDET) has biased composition (acidic residues). The segment covering 840–852 (QREQQRPVDDSDA) has biased composition (basic and acidic residues). Residues 853–865 (RSVCSTCSSSSSS) are compositionally biased toward low complexity.

Belongs to the prickle / espinas / testin family. As to quaternary structure, interacts with dsh; PET and LIM domains interact with dsh DEP domain, in wing cells. Interacts with Vang in photoreceptor cells.

The protein resides in the cell membrane. Its function is as follows. Acts in a planar cell polarity (PCP) complex; polarization along the apical/basal axis of epithelial cells. PCP signaling in the wing disk requires the receptor fz and the cytoplasmic proteins dsh and pk. These act in a feedback loop leading to activation of the jnk cascade and subsequent polarized arrangement of hairs and bristles. Dgo and pk compete with one another for dsh binding, thereby modulating fz dsh activity and ensuring tight control over fz PCP signaling. Vang, stan and pk function together to regulate the establishment of tissue polarity in the adult eye. The chain is Protein prickle from Anopheles gambiae (African malaria mosquito).